The following is a 354-amino-acid chain: MAELKNDRYLRALLKQPVDRTPVWMMRQAGRYLPEYKATRAEAGDFMSLCKNQDLACEVTLQPLRRYDLDAAILFSDILTVPDAMGLGLYFETGEGPRFERPTDTIDSIKKLCIPDPEDELGYVMRAVSTIRRELKGEVPLIGFSGSPWTLATYMVEGGSSKAFEKIKKMAYEEPATLHMLLDKLADSVTLYLNAQVANGAQSLMIFDSWGGALSHHAYREFSLRYMQKIVDGLTRHADGRQVPVTLFTKGGGLWLESMAETGCDALGLDWTVDIGDARRRVGHKVALQGNMDPSVLYGTPERIHQEVDQILSSYGEGTGHVFNLGHGIHQHVDPERAGSFINSVHELSAKYHK.

Substrate-binding positions include 27–31, aspartate 77, tyrosine 154, serine 209, and histidine 327; that span reads RQAGR.

The protein belongs to the uroporphyrinogen decarboxylase family. As to quaternary structure, homodimer.

It is found in the cytoplasm. The enzyme catalyses uroporphyrinogen III + 4 H(+) = coproporphyrinogen III + 4 CO2. The protein operates within porphyrin-containing compound metabolism; protoporphyrin-IX biosynthesis; coproporphyrinogen-III from 5-aminolevulinate: step 4/4. Its function is as follows. Catalyzes the decarboxylation of four acetate groups of uroporphyrinogen-III to yield coproporphyrinogen-III. In Shewanella halifaxensis (strain HAW-EB4), this protein is Uroporphyrinogen decarboxylase.